A 605-amino-acid polypeptide reads, in one-letter code: UvrABC system protein C (605 aa).

The region spanning 13-92 is the GIY-YIG domain; the sequence is SEPGVYLMKD…IKRYRPKYNV (80 aa). One can recognise a UVR domain in the interval 205 to 240; it reads EKLMELLKEKMNESSMNFRFEEAAVYRDKIKSLEEM.

The protein belongs to the UvrC family. In terms of assembly, interacts with UvrB in an incision complex.

Its subcellular location is the cytoplasm. In terms of biological role, the UvrABC repair system catalyzes the recognition and processing of DNA lesions. UvrC both incises the 5' and 3' sides of the lesion. The N-terminal half is responsible for the 3' incision and the C-terminal half is responsible for the 5' incision. The polypeptide is UvrABC system protein C (Clostridioides difficile (strain 630) (Peptoclostridium difficile)).